The chain runs to 115 residues: Chondroitin proteoglycan 8 (115 aa).

An N-terminal signal peptide occupies residues 1 to 16 (MRPFILLALLVSVTVA). The interval 33–96 (VRRTTRDASD…GSGAAEVTSV (64 aa)) is disordered. O-linked (Xyl...) (chondroitin sulfate) serine glycosylation is found at Ser-61, Ser-63, Ser-84, Ser-88, and Ser-109.

This Caenorhabditis elegans protein is Chondroitin proteoglycan 8.